The following is a 112-amino-acid chain: uncharacterized protein (112 aa).

This is an uncharacterized protein from Saccharomyces cerevisiae (strain ATCC 204508 / S288c) (Baker's yeast).